Reading from the N-terminus, the 162-residue chain is Austinoid biosynthesis clusters protein J (162 aa).

Belongs to the trt14 isomerase family. Homodimer.

It functions in the pathway secondary metabolite biosynthesis; terpenoid biosynthesis. Part of the gene cluster B that mediates the biosynthesis of austinol and dehydroaustinol, two fungal meroterpenoids. The first step of the pathway is the synthesis of 3,5-dimethylorsellinic acid by the polyketide synthase ausA. 3,5-dimethylorsellinic acid is then prenylated by the polyprenyl transferase ausN. Further epoxidation by the FAD-dependent monooxygenase ausM and cyclization by the probable terpene cyclase ausL lead to the formation of protoaustinoid A. Protoaustinoid A is then oxidized to spiro-lactone preaustinoid A3 by the combined action of the FAD-binding monooxygenases ausB and ausC, and the dioxygenase ausE. Acid-catalyzed keto-rearrangement and ring contraction of the tetraketide portion of preaustinoid A3 by ausJ lead to the formation of preaustinoid A4. The aldo-keto reductase ausK, with the help of ausH, is involved in the next step by transforming preaustinoid A4 into isoaustinone which is in turn hydroxylated by the P450 monooxygenase ausI to form austinolide. Finally, the cytochrome P450 monooxygenase ausG modifies austinolide to austinol. Austinol can be further modified to dehydroaustinol which forms a diffusible complex with diorcinol that initiates conidiation. Due to genetic rearrangements of the clusters and the subsequent loss of some enzymes, the end products of the Emericella nidulans austinoid biosynthesis clusters are austinol and dehydroaustinol, even if additional enzymes, such as the O-acetyltransferase ausQ and the cytochrome P450 monooxygenase ausR are still functional. In Emericella nidulans (strain FGSC A4 / ATCC 38163 / CBS 112.46 / NRRL 194 / M139) (Aspergillus nidulans), this protein is Austinoid biosynthesis clusters protein J.